Consider the following 913-residue polypeptide: Translation initiation factor IF-2 (913 aa).

The disordered stretch occupies residues 1-322 (MTDNNDDKTL…QEKFRRSQMQ (322 aa)). Residues 60–113 (VQPVVAAPKPAAPAPVAARPQAPQPRIHQPGGQQQRPGSSQSQQRSGSSAPQQR) show a composition bias toward low complexity. Basic and acidic residues predominate over residues 131–180 (MEARRRALMEAQARDVVEAKQRAEDEARRKVEEEQRIAAEKMEAANRAAE). 3 stretches are compositionally biased toward low complexity: residues 181–195 (EAAA…PAAE), 203–238 (ERPA…AAAP), and 261–277 (PARG…PAAR). The tr-type G domain occupies 411–578 (SRPPVVTIMG…AILLQAEILD (168 aa)). Residues 420–427 (GHVDHGKT) form a G1 region. Residue 420 to 427 (GHVDHGKT) participates in GTP binding. The segment at 445 to 449 (GITQH) is G2. Positions 466–469 (DTPG) are G3. Residues 466-470 (DTPGH) and 520-523 (NKID) each bind GTP. The tract at residues 520-523 (NKID) is G4. Positions 556–558 (SAK) are G5.

It belongs to the TRAFAC class translation factor GTPase superfamily. Classic translation factor GTPase family. IF-2 subfamily.

It localises to the cytoplasm. Its function is as follows. One of the essential components for the initiation of protein synthesis. Protects formylmethionyl-tRNA from spontaneous hydrolysis and promotes its binding to the 30S ribosomal subunits. Also involved in the hydrolysis of GTP during the formation of the 70S ribosomal complex. The chain is Translation initiation factor IF-2 from Agrobacterium fabrum (strain C58 / ATCC 33970) (Agrobacterium tumefaciens (strain C58)).